Consider the following 376-residue polypeptide: Chaperone protein DnaJ (376 aa).

In terms of domain architecture, J spans 5–70 (DYYEILGVSK…QKRAAYDQYG (66 aa)). Residues 131–209 (GVTKEIRIPT…CHGHGRVERS (79 aa)) form a CR-type zinc finger. 8 residues coordinate Zn(2+): Cys-144, Cys-147, Cys-161, Cys-164, Cys-183, Cys-186, Cys-197, and Cys-200. CXXCXGXG motif repeat units follow at residues 144–151 (CDVCHGSG), 161–168 (CPTCHGSG), 183–190 (CPHCQGRG), and 197–204 (CNKCHGHG).

It belongs to the DnaJ family. Homodimer. Requires Zn(2+) as cofactor.

Its subcellular location is the cytoplasm. Functionally, participates actively in the response to hyperosmotic and heat shock by preventing the aggregation of stress-denatured proteins and by disaggregating proteins, also in an autonomous, DnaK-independent fashion. Unfolded proteins bind initially to DnaJ; upon interaction with the DnaJ-bound protein, DnaK hydrolyzes its bound ATP, resulting in the formation of a stable complex. GrpE releases ADP from DnaK; ATP binding to DnaK triggers the release of the substrate protein, thus completing the reaction cycle. Several rounds of ATP-dependent interactions between DnaJ, DnaK and GrpE are required for fully efficient folding. Also involved, together with DnaK and GrpE, in the DNA replication of plasmids through activation of initiation proteins. The protein is Chaperone protein DnaJ of Shigella boydii serotype 18 (strain CDC 3083-94 / BS512).